Consider the following 273-residue polypeptide: Inactive endochitinase At2g43600 (273 aa).

An N-terminal signal peptide occupies residues Met-1–Ser-22. A Chitin-binding type-1 domain is found at Gln-23 to Ile-61. Intrachain disulfides connect Cys-25–Cys-37, Cys-30–Cys-43, Cys-36–Cys-50, and Cys-54–Cys-59. Residues Gly-78 to Cys-273 are catalytic. An N-linked (GlcNAc...) asparagine glycan is attached at Asn-99.

The protein belongs to the glycosyl hydrolase 19 family. Chitinase class I subfamily.

The polypeptide is Inactive endochitinase At2g43600 (Arabidopsis thaliana (Mouse-ear cress)).